The primary structure comprises 225 residues: Proteoglycan 3 (225 aa).

Residues 1 to 17 form the signal peptide; sequence MQCLLLLPFLLLGTVSA. A C-type lectin domain is found at 107–224; it reads CKICRYLLVR…CDKQLPFVCS (118 aa). 2 cysteine pairs are disulfide-bonded: Cys128-Cys223 and Cys200-Cys215.

Expressed in bone marrow. Not detected in placenta.

It is found in the cytoplasmic granule. Functionally, possesses similar cytotoxic and cytostimulatory activities to PRG2/MBP. In vitro, stimulates neutrophil superoxide production and IL8 release, and histamine and leukotriene C4 release from basophils. The protein is Proteoglycan 3 of Homo sapiens (Human).